The chain runs to 418 residues: UDP-N-acetylglucosamine 1-carboxyvinyltransferase 2 (418 aa).

Residue 22–23 participates in phosphoenolpyruvate binding; the sequence is KN. Position 93 (Arg93) interacts with UDP-N-acetyl-alpha-D-glucosamine. Residue Cys117 is the Proton donor of the active site. Cys117 is subject to 2-(S-cysteinyl)pyruvic acid O-phosphothioketal. Residues 122 to 126, Asp305, and Ile327 contribute to the UDP-N-acetyl-alpha-D-glucosamine site; that span reads RPIDQ.

The protein belongs to the EPSP synthase family. MurA subfamily.

Its subcellular location is the cytoplasm. It carries out the reaction phosphoenolpyruvate + UDP-N-acetyl-alpha-D-glucosamine = UDP-N-acetyl-3-O-(1-carboxyvinyl)-alpha-D-glucosamine + phosphate. Its pathway is cell wall biogenesis; peptidoglycan biosynthesis. Functionally, cell wall formation. Adds enolpyruvyl to UDP-N-acetylglucosamine. This is UDP-N-acetylglucosamine 1-carboxyvinyltransferase 2 from Clostridium acetobutylicum (strain ATCC 824 / DSM 792 / JCM 1419 / IAM 19013 / LMG 5710 / NBRC 13948 / NRRL B-527 / VKM B-1787 / 2291 / W).